Consider the following 287-residue polypeptide: Pantothenate synthetase (287 aa).

Residue 30 to 37 participates in ATP binding; sequence MGNLHSGH. His-37 serves as the catalytic Proton donor. Residue Gln-61 participates in (R)-pantoate binding. Gln-61 serves as a coordination point for beta-alanine. Residue 149-152 participates in ATP binding; it reads GEKD. Gln-155 contributes to the (R)-pantoate binding site. Residues Val-178 and 186 to 189 each bind ATP; that span reads LSSR.

Belongs to the pantothenate synthetase family. In terms of assembly, homodimer.

It localises to the cytoplasm. It carries out the reaction (R)-pantoate + beta-alanine + ATP = (R)-pantothenate + AMP + diphosphate + H(+). It functions in the pathway cofactor biosynthesis; (R)-pantothenate biosynthesis; (R)-pantothenate from (R)-pantoate and beta-alanine: step 1/1. In terms of biological role, catalyzes the condensation of pantoate with beta-alanine in an ATP-dependent reaction via a pantoyl-adenylate intermediate. The sequence is that of Pantothenate synthetase from Pseudomonas entomophila (strain L48).